Reading from the N-terminus, the 425-residue chain is MNAMLETPELPAVFDGVKLAAVAAVLYVIVRCLNLKSPTAPPDLYFQDSGLSRFLLKSCPLLTKEYIPPLIWGKSGHIQTALYGKMGRVRSPHPYGHRKFITMSDGATSTFDLFEPLAEHCVGDDITMVICPGIANHSEKQYIRTFVDYAQKNGYRCAVLNHLGALPNIELTSPRMFTYGCTWEFGAMVNYIKKTYPLTQLVVVGFSLGGNIVCKYLGETQANQEKVLCCVSVCQGYSALRAQETFMQWDQCRRFYNFLMADNMKKIILSHRQALFGDHVKKPQSLEDTDLSRLYTATSLMQIDDNVMRKFHGYNSLKEYYEEESCMRYLHRIYVPLMLVNAADDPLVHESLLTIPKSLSEKRENVMFVLPLHGGHLGFFEGSVLFPEPLTWMDKLVVEYANAICQWERNKLQCSDTEQVEADLE.

Residues 1–9 (MNAMLETPE) are Cytoplasmic-facing. A helical; Signal-anchor for type II membrane protein transmembrane segment spans residues 10–30 (LPAVFDGVKLAAVAAVLYVIV). Residues 31–425 (RCLNLKSPTA…DTEQVEADLE (395 aa)) are Extracellular-facing. One can recognise an AB hydrolase-1 domain in the interval 128 to 382 (MVICPGIANH…HGGHLGFFEG (255 aa)). N-linked (GlcNAc...) asparagine glycosylation is present at Asn-136. Ser-207 acts as the Nucleophile in catalysis. Active-site charge relay system residues include Asp-345 and His-376.

This sequence belongs to the AB hydrolase superfamily. AB hydrolase 4 family. In terms of tissue distribution, present in sperm (at protein level).

The protein resides in the cell projection. Its subcellular location is the cilium. It localises to the flagellum membrane. The protein localises to the cell membrane. It carries out the reaction an acetyl ester + H2O = an aliphatic alcohol + acetate + H(+). It catalyses the reaction Hydrolyzes glycerol monoesters of long-chain fatty acids.. The catalysed reaction is a triacylglycerol + H2O = a diacylglycerol + a fatty acid + H(+). The enzyme catalyses 2-(5Z,8Z,11Z,14Z-eicosatetraenoyl)-glycerol + H2O = glycerol + (5Z,8Z,11Z,14Z)-eicosatetraenoate + H(+). It carries out the reaction a butanoate ester + H2O = an aliphatic alcohol + butanoate + H(+). It catalyses the reaction hexadecanoate ester + H2O = an aliphatic alcohol + hexadecanoate + H(+). Acylglycerol lipase activity is activated upon binding to progesterone. In terms of biological role, progesterone-dependent acylglycerol lipase that catalyzes hydrolysis of endocannabinoid arachidonoylglycerol (AG) from cell membrane. Acts as a progesterone receptor: progesterone-binding activates the acylglycerol lipase activity, mediating degradation of 1-arachidonoylglycerol (1AG) and 2-arachidonoylglycerol (2AG) to glycerol and arachidonic acid (AA). Also displays an ester hydrolase activity against acetyl ester, butanoate ester and hexadecanoate ester. Plays a key role in sperm capacitation in response to progesterone by mediating degradation of 2AG, an inhibitor of the sperm calcium channel CatSper, leading to calcium influx via CatSper and sperm activation. May also play a role in smooth muscle cells migration. This Homo sapiens (Human) protein is Monoacylglycerol lipase ABHD2.